Reading from the N-terminus, the 180-residue chain is Large ribosomal subunit protein uL5 (180 aa).

The protein belongs to the universal ribosomal protein uL5 family. As to quaternary structure, part of the 50S ribosomal subunit; part of the 5S rRNA/L5/L18/L25 subcomplex. Contacts the 5S rRNA and the P site tRNA. Forms a bridge to the 30S subunit in the 70S ribosome.

Functionally, this is one of the proteins that bind and probably mediate the attachment of the 5S RNA into the large ribosomal subunit, where it forms part of the central protuberance. In the 70S ribosome it contacts protein S13 of the 30S subunit (bridge B1b), connecting the 2 subunits; this bridge is implicated in subunit movement. Contacts the P site tRNA; the 5S rRNA and some of its associated proteins might help stabilize positioning of ribosome-bound tRNAs. The chain is Large ribosomal subunit protein uL5 from Roseiflexus sp. (strain RS-1).